A 492-amino-acid chain; its full sequence is Trehalose-6-phosphate synthase (492 aa).

R25 lines the D-glucose 6-phosphate pocket. Residue 45 to 46 (GG) coordinates UDP-alpha-D-glucose. The D-glucose 6-phosphate site is built by Y101 and D155. R297 and K302 together coordinate UDP-alpha-D-glucose. R335 lines the D-glucose 6-phosphate pocket. 400–404 (LVAKE) contributes to the UDP-alpha-D-glucose binding site.

The protein belongs to the glycosyltransferase 20 family. As to quaternary structure, homotetramer.

It carries out the reaction ADP-alpha-D-glucose + D-glucose 6-phosphate = alpha,alpha-trehalose 6-phosphate + ADP + H(+). It catalyses the reaction CDP-alpha-D-glucose + D-glucose 6-phosphate = alpha,alpha-trehalose 6-phosphate + CDP + H(+). The enzyme catalyses GDP-alpha-D-glucose + D-glucose 6-phosphate = alpha,alpha-trehalose 6-phosphate + GDP + H(+). The catalysed reaction is TDP-alpha-D-glucose + D-glucose 6-phosphate = 5-methyl-UDP + alpha,alpha-trehalose 6-phosphate + H(+). It carries out the reaction D-glucose 6-phosphate + UDP-alpha-D-glucose = alpha,alpha-trehalose 6-phosphate + UDP + H(+). The protein operates within glycan biosynthesis; trehalose biosynthesis. Its function is as follows. Probably involved in the osmoprotection via the biosynthesis of trehalose and in the production of glycogen and alpha-glucan via the TreS-Pep2 branch involved in the biosynthesis of maltose-1-phosphate (M1P). Catalyzes the transfer of glucose from UDP-glucose (UDP-Glc) to D-glucose 6-phosphate (Glc-6-P) to form trehalose-6-phosphate. Probably also able to use ADP-Glc, CDP-Glc, GDP-Glc and TDP-Glc as glucosyl donors. This Mycobacterium avium (strain 104) protein is Trehalose-6-phosphate synthase.